Reading from the N-terminus, the 113-residue chain is MEAKAIARYVRISPRKVRLVVDLIRGKSLEEARNILRYTNKRGAYFVAKVLESAAANAVNNHDMLEDRLYVKAAYVDEGPALKRVLPRARGRADIIKKRTSHITVILGEKHGK.

This sequence belongs to the universal ribosomal protein uL22 family. In terms of assembly, part of the 50S ribosomal subunit.

Functionally, this protein binds specifically to 23S rRNA; its binding is stimulated by other ribosomal proteins, e.g. L4, L17, and L20. It is important during the early stages of 50S assembly. It makes multiple contacts with different domains of the 23S rRNA in the assembled 50S subunit and ribosome. The globular domain of the protein is located near the polypeptide exit tunnel on the outside of the subunit, while an extended beta-hairpin is found that lines the wall of the exit tunnel in the center of the 70S ribosome. The chain is Large ribosomal subunit protein uL22 from Thermus thermophilus (strain ATCC BAA-163 / DSM 7039 / HB27).